A 600-amino-acid chain; its full sequence is Proline--tRNA ligase (600 aa).

This sequence belongs to the class-II aminoacyl-tRNA synthetase family. ProS type 1 subfamily. In terms of assembly, homodimer.

The protein resides in the cytoplasm. It carries out the reaction tRNA(Pro) + L-proline + ATP = L-prolyl-tRNA(Pro) + AMP + diphosphate. Functionally, catalyzes the attachment of proline to tRNA(Pro) in a two-step reaction: proline is first activated by ATP to form Pro-AMP and then transferred to the acceptor end of tRNA(Pro). As ProRS can inadvertently accommodate and process non-cognate amino acids such as alanine and cysteine, to avoid such errors it has two additional distinct editing activities against alanine. One activity is designated as 'pretransfer' editing and involves the tRNA(Pro)-independent hydrolysis of activated Ala-AMP. The other activity is designated 'posttransfer' editing and involves deacylation of mischarged Ala-tRNA(Pro). The misacylated Cys-tRNA(Pro) is not edited by ProRS. This Prochlorococcus marinus (strain MIT 9515) protein is Proline--tRNA ligase.